The chain runs to 1816 residues: Kinesin-like protein KIF1B (1816 aa).

Ser-2 carries the N-acetylserine modification. The Kinesin motor domain occupies 5 to 354; that stretch reads SVKVAVRVRP…LRYADRAKQI (350 aa). 97 to 104 contacts ATP; that stretch reads GQTGAGKS. The interaction with KIFBP stretch occupies residues 270–350; it reads NINKSLTTLG…TLSTLRYADR (81 aa). 2 coiled-coil regions span residues 365 to 386 and 470 to 502; these read NAKLVRELKEEVTRLKDLLRAQ and GEEAIERLKESEKIIAELNETWEEKLRKTEAIR. The FHA domain maps to 556–612; the sequence is TRVGQADAERRQDIVLSGAHIKEEHCLFRSERSNTGEVIVTLEPCERSETYVNGKRV. Phosphothreonine occurs at positions 647 and 652. Coiled coils occupy residues 668–737 and 841–869; these read EKQG…EEEV and SLDKLKQRLDLMREMYDRAGEVASSAQDD. 5 positions are modified to phosphoserine: Ser-1054, Ser-1057, Ser-1416, Ser-1454, and Ser-1487. Residues 1522 to 1571 form a disordered region; it reads VPKSLSDSLSPSLSSGTLSTSTSISSQISTTTFESAITPSESSGYDSADV. The span at 1525–1553 shows a compositional bias: low complexity; it reads SLSDSLSPSLSSGTLSTSTSISSQISTTT. Positions 1554–1566 are enriched in polar residues; the sequence is FESAITPSESSGY. Phosphoserine is present on residues Ser-1573, Ser-1603, Ser-1610, and Ser-1613. Residues 1620 to 1637 show a composition bias toward low complexity; that stretch reads SVSSFSSSTLTPSSTCPS. The segment at 1620–1659 is disordered; that stretch reads SVSSFSSSTLTPSSTCPSLVDSRSSSMDQKTPEANSRASS. Positions 1640–1659 are enriched in polar residues; it reads DSRSSSMDQKTPEANSRASS. In terms of domain architecture, PH spans 1702-1799; the sequence is VSKKGYLHFK…WLYAFNPLLA (98 aa).

It belongs to the TRAFAC class myosin-kinesin ATPase superfamily. Kinesin family. Unc-104 subfamily. As to quaternary structure, monomer. Interacts with KIFBP; positively regulates KIF1B microtubule motor activity. Interacts (via C-terminus end of the kinesin-motor domain) with CHP1; the interaction occurs in a calcium-dependent manner. In terms of assembly, interacts with MADD (via death domain); links this isoform to Rab3-carrying vesicles in anterograde synaptic vesicle transport. Expressed in the brain (at protein level).

It is found in the cytoplasm. The protein localises to the cytoskeleton. Its subcellular location is the cytoplasmic vesicle. The protein resides in the secretory vesicle. It localises to the synaptic vesicle membrane. It is found in the mitochondrion. The catalysed reaction is ATP + H2O + a kinesin associated with a microtubule at position (n) = ADP + phosphate a kinesin associated with a microtubule at position (n+1, toward the plus end).. Its function is as follows. Has a plus-end-directed microtubule motor activity and functions as a motor for transport of vesicles and organelles along microtubules. Functionally, has a plus-end-directed microtubule motor activity and functions as a motor for anterograde synaptic vesicle transport along axonal microtubules from the cell body to the presynapse in neuronal cells. Functions as a downstream effector in a developmental apoptotic pathway that is activated when nerve growth factor (NGF) becomes limiting for neuronal progenitor cells. Has a plus-end-directed microtubule motor activity and functions as a motor for anterograde transport of mitochondria. This Mus musculus (Mouse) protein is Kinesin-like protein KIF1B.